We begin with the raw amino-acid sequence, 331 residues long: Probable allantoicase (331 aa).

The protein belongs to the allantoicase family.

It carries out the reaction allantoate + H2O = (S)-ureidoglycolate + urea. Its pathway is nitrogen metabolism; (S)-allantoin degradation; (S)-ureidoglycolate from allantoate (aminidohydrolase route): step 1/1. In Pseudomonas syringae pv. syringae (strain B728a), this protein is Probable allantoicase.